The primary structure comprises 421 residues: Serine hydroxymethyltransferase (421 aa).

(6S)-5,6,7,8-tetrahydrofolate is bound by residues Leu121 and 125–127 (GHL). An N6-(pyridoxal phosphate)lysine modification is found at Lys229.

This sequence belongs to the SHMT family. As to quaternary structure, homodimer. Pyridoxal 5'-phosphate serves as cofactor.

It is found in the cytoplasm. The catalysed reaction is (6R)-5,10-methylene-5,6,7,8-tetrahydrofolate + glycine + H2O = (6S)-5,6,7,8-tetrahydrofolate + L-serine. It participates in one-carbon metabolism; tetrahydrofolate interconversion. Its pathway is amino-acid biosynthesis; glycine biosynthesis; glycine from L-serine: step 1/1. Catalyzes the reversible interconversion of serine and glycine with tetrahydrofolate (THF) serving as the one-carbon carrier. This reaction serves as the major source of one-carbon groups required for the biosynthesis of purines, thymidylate, methionine, and other important biomolecules. Also exhibits THF-independent aldolase activity toward beta-hydroxyamino acids, producing glycine and aldehydes, via a retro-aldol mechanism. The chain is Serine hydroxymethyltransferase from Actinobacillus pleuropneumoniae serotype 7 (strain AP76).